Consider the following 163-residue polypeptide: Nucleotide-binding protein ROP_16630 (163 aa).

It belongs to the YajQ family.

Its function is as follows. Nucleotide-binding protein. The polypeptide is Nucleotide-binding protein ROP_16630 (Rhodococcus opacus (strain B4)).